A 674-amino-acid chain; its full sequence is F420-dependent formate dehydrogenase 1 subunit alpha (674 aa).

Residues 3–59 form the 4Fe-4S Mo/W bis-MGD-type domain; sequence LDFIHTICPYCGTGCGVDLVVKDGTLVGTNPFKRHPVNEGKTCIKGSYCHEFVHRDD. [4Fe-4S] cluster contacts are provided by cysteine 10, cysteine 13, cysteine 17, and cysteine 45. Residue selenocysteine 132 is a non-standard amino acid, selenocysteine.

It belongs to the prokaryotic molybdopterin-containing oxidoreductase family. In terms of assembly, dimer of an alpha (FdhA1) and a beta (FdhB1) subunit. [4Fe-4S] cluster serves as cofactor. Mo-bis(molybdopterin guanine dinucleotide) is required as a cofactor. Requires Zn(2+) as cofactor.

The catalysed reaction is oxidized coenzyme F420-(gamma-L-Glu)(n) + formate + 2 H(+) = reduced coenzyme F420-(gamma-L-Glu)(n) + CO2. In terms of biological role, catalyzes the oxidation of formate to carbon dioxide, with coenzyme F420 as the electron acceptor. In vitro can also use methyl viologen as electron acceptor. This Methanococcus maripaludis (strain DSM 14266 / JCM 13030 / NBRC 101832 / S2 / LL) protein is F420-dependent formate dehydrogenase 1 subunit alpha.